The chain runs to 172 residues: 3-phenylpropionate/cinnamic acid dioxygenase subunit beta (172 aa).

Belongs to the bacterial ring-hydroxylating dioxygenase beta subunit family. In terms of assembly, this dioxygenase system consists of four proteins: the two subunits of the hydroxylase component (HcaE and HcaF), a ferredoxin (HcaC) and a ferredoxin reductase (HcaD).

The catalysed reaction is 3-phenylpropanoate + NADH + O2 + H(+) = 3-(cis-5,6-dihydroxycyclohexa-1,3-dien-1-yl)propanoate + NAD(+). It carries out the reaction (E)-cinnamate + NADH + O2 + H(+) = (2E)-3-(cis-5,6-dihydroxycyclohexa-1,3-dien-1-yl)prop-2-enoate + NAD(+). The protein operates within aromatic compound metabolism; 3-phenylpropanoate degradation. In terms of biological role, part of the multicomponent 3-phenylpropionate dioxygenase. Converts 3-phenylpropionic acid (PP) and cinnamic acid (CI) into 3-phenylpropionate-dihydrodiol (PP-dihydrodiol) and cinnamic acid-dihydrodiol (CI-dihydrodiol), respectively. This Escherichia coli O157:H7 protein is 3-phenylpropionate/cinnamic acid dioxygenase subunit beta.